We begin with the raw amino-acid sequence, 364 residues long: RNA-binding protein 4 (364 aa).

2 consecutive RRM domains span residues 2–72 and 78–148; these read VKLF…ASKN and TKLH…LSTS. Lys-79 participates in a covalent cross-link: Glycyl lysine isopeptide (Lys-Gly) (interchain with G-Cter in SUMO2). Phosphoserine is present on Ser-86. Residue Lys-92 forms a Glycyl lysine isopeptide (Lys-Gly) (interchain with G-Cter in SUMO2) linkage. A CCHC-type zinc finger spans residues 160-177; the sequence is SGCYRCGKEGHWSKECPI. The interval 196 to 364 is interaction with TNPO3; sequence AVRTPYTMSY…YADRARYSAF (169 aa). Phosphoserine is present on Ser-309.

As to quaternary structure, interacts with TNPO3; the interaction mediates nuclear import of the protein and is disrupted by nuclear Ran bound to GTP. Interacts with EIF4G1 and WT1. Interacts with EIF4A1; the interaction is modulated under stress-induced conditions. Interacts with AGO1. Interacts with AGO2; the interaction occurs under both cell proliferation and differentiation conditions and in an RNA- and phosphorylation-independent manner. Interacts with DDX5; the interaction occurs in an RNA-independent manner. Interacts with RBPMS; the interaction allows cooperative assembly of RNA-bound stable cell-specific alternative splicing regulatory complexes. Phosphorylated. Phosphorylated in vitro on Ser-309 by SRPK1. Phosphorylation on Ser-309 is induced upon cell stress signaling, which alters its subcellular localization and may modulate its activity on IRES-mediated mRNA translation. Phosphorylation on Ser-309 is induced upon cell muscle differentiation.

Its subcellular location is the nucleus. The protein resides in the nucleolus. It is found in the nucleus speckle. The protein localises to the cytoplasm. It localises to the cytoplasmic granule. Functionally, RNA-binding factor involved in multiple aspects of cellular processes like alternative splicing of pre-mRNA and translation regulation. Modulates alternative 5'-splice site and exon selection. Acts as a muscle cell differentiation-promoting factor. Activates exon skipping of the PTB pre-mRNA during muscle cell differentiation. Antagonizes the activity of the splicing factor PTBP1 to modulate muscle cell-specific exon selection of alpha tropomyosin. Binds to intronic pyrimidine-rich sequence of the TPM1 and MAPT pre-mRNAs. Required for the translational activation of PER1 mRNA in response to circadian clock. Binds directly to the 3'-UTR of the PER1 mRNA. Exerts a suppressive activity on Cap-dependent translation via binding to CU-rich responsive elements within the 3'UTR of mRNAs, a process increased under stress conditions or during myocytes differentiation. Recruits EIF4A1 to stimulate IRES-dependent translation initiation in respons to cellular stress. Associates to internal ribosome entry segment (IRES) in target mRNA species under stress conditions. Plays a role for miRNA-guided RNA cleavage and translation suppression by promoting association of AGO2-containing miRNPs with their cognate target mRNAs. Associates with miRNAs during muscle cell differentiation. Binds preferentially to 5'-CGCGCG[GCA]-3' motif in vitro. This chain is RNA-binding protein 4 (RBM4), found in Macaca fascicularis (Crab-eating macaque).